Consider the following 76-residue polypeptide: Tautomerase PptA (76 aa).

The active-site Proton acceptor; via imino nitrogen is the P2.

This sequence belongs to the 4-oxalocrotonate tautomerase family. PptA subfamily. In terms of assembly, homodimer.

The protein localises to the cytoplasm. This is Tautomerase PptA from Pectobacterium carotovorum subsp. carotovorum (strain PC1).